A 351-amino-acid chain; its full sequence is uncharacterized protein (351 aa).

The disordered stretch occupies residues 25-67; the sequence is KKAETETLPPANSQPAAPAPEAKPTEAPVAKAEAKPETPAQPV. Residues 33-55 show a composition bias toward low complexity; sequence PPANSQPAAPAPEAKPTEAPVAK.

This is an uncharacterized protein from Escherichia coli (strain K12).